A 178-amino-acid polypeptide reads, in one-letter code: Putative RING-H2 finger protein ATL19 (178 aa).

The helical transmembrane segment at leucine 11–isoleucine 31 threads the bilayer. The RING-type; atypical zinc-finger motif lies at cysteine 130–arginine 172.

This sequence belongs to the RING-type zinc finger family. ATL subfamily.

It localises to the membrane. The catalysed reaction is S-ubiquitinyl-[E2 ubiquitin-conjugating enzyme]-L-cysteine + [acceptor protein]-L-lysine = [E2 ubiquitin-conjugating enzyme]-L-cysteine + N(6)-ubiquitinyl-[acceptor protein]-L-lysine.. It participates in protein modification; protein ubiquitination. In Arabidopsis thaliana (Mouse-ear cress), this protein is Putative RING-H2 finger protein ATL19 (ATL19).